The following is a 344-amino-acid chain: Methionine import ATP-binding protein MetN (344 aa).

The ABC transporter domain maps to Ile-2–Ile-241. Gly-38–Ser-45 contributes to the ATP binding site.

It belongs to the ABC transporter superfamily. Methionine importer (TC 3.A.1.24) family. In terms of assembly, the complex is composed of two ATP-binding proteins (MetN), two transmembrane proteins (MetI) and a solute-binding protein (MetQ).

Its subcellular location is the cell inner membrane. The enzyme catalyses L-methionine(out) + ATP + H2O = L-methionine(in) + ADP + phosphate + H(+). It catalyses the reaction D-methionine(out) + ATP + H2O = D-methionine(in) + ADP + phosphate + H(+). Functionally, part of the ABC transporter complex MetNIQ involved in methionine import. Responsible for energy coupling to the transport system. This is Methionine import ATP-binding protein MetN from Burkholderia thailandensis (strain ATCC 700388 / DSM 13276 / CCUG 48851 / CIP 106301 / E264).